Consider the following 538-residue polypeptide: Thermosome subunit beta (538 aa).

Positions 518-538 (SSGSSEEGMEEMGGMGGMPPM) are disordered. Gly residues predominate over residues 528-538 (EMGGMGGMPPM).

It belongs to the TCP-1 chaperonin family. In terms of assembly, forms a Heterooligomeric complex of two stacked eight-membered rings.

In terms of biological role, molecular chaperone; binds unfolded polypeptides in vitro, and has a weak ATPase activity. The chain is Thermosome subunit beta (thsB) from Methanothermobacter thermautotrophicus (strain ATCC 29096 / DSM 1053 / JCM 10044 / NBRC 100330 / Delta H) (Methanobacterium thermoautotrophicum).